The sequence spans 727 residues: BRCA1-A complex subunit RAP80 (727 aa).

The disordered stretch occupies residues 1-23 (MPRRKKKIKEASESQNLEKKDLE). The necessary for transcriptional repression stretch occupies residues 1–101 (MPRRKKKIKE…SEQEAREVNN (101 aa)). The segment covering 9–23 (KEASESQNLEKKDLE) has biased composition (basic and acidic residues). Residue K20 forms a Glycyl lysine isopeptide (Lys-Gly) (interchain with G-Cter in SUMO2) linkage. S29 is modified (phosphoserine). K31 is covalently cross-linked (Glycyl lysine isopeptide (Lys-Gly) (interchain with G-Cter in SUMO2)). Phosphoserine is present on residues S44 and S46. Positions 45–70 (DSDGEETKEENGLQKTKTKQSNRSKC) are disordered. T51 carries the phosphothreonine modification. Positions 60-70 (TKTKQSNRSKC) are enriched in basic residues. The LR motif motif lies at 60-78 (TKTKQSNRSKCLAKRKVAH). Glycyl lysine isopeptide (Lys-Gly) (interchain with G-Cter in SUMO2) cross-links involve residues K75 and K90. UIM domains are found at residues 80–99 (SEEEQFALALKMSEQEAREV) and 104–124 (EKEEELLRKAIAESLNSCWSS). A UIM-linker region spans residues 97-103 (REVNNQE). The tract at residues 100–200 (NNQEEKEEEL…EEPVSGSSGS (101 aa)) is necessary for interaction with NR6A1 N-terminus. The disordered stretch occupies residues 133–206 (PLAAELSSHS…SSGSWDQSSQ (74 aa)). S140 carries the post-translational modification Phosphoserine. Positions 176–188 (AEQRKEPWDHNEN) are enriched in basic and acidic residues. Positions 195-206 (SGSSGSWDQSSQ) are enriched in low complexity. The residue at position 205 (S205) is a Phosphoserine. A Glycyl lysine isopeptide (Lys-Gly) (interchain with G-Cter in SUMO2) cross-link involves residue K245. The tract at residues 270–400 (TGGTVHYYWG…EEEPTTSRGQ (131 aa)) is AIR. Residues 326-427 (PRPPFLIQNE…SEGDNSVPTT (102 aa)) form a disordered region. Residues 355–364 (DEAKEERQES) are compositionally biased toward basic and acidic residues. S379 is subject to Phosphoserine. Residues K382 and K387 each participate in a glycyl lysine isopeptide (Lys-Gly) (interchain with G-Cter in SUMO2) cross-link. Positions 400–508 (QSSQGLFVEE…ENPPPAVSSS (109 aa)) are necessary for interaction with NR6A1 C-terminus. S402 carries the post-translational modification Phosphoserine. K436 participates in a covalent cross-link: Glycyl lysine isopeptide (Lys-Gly) (interchain with G-Cter in SUMO2). Position 474 is a phosphoserine (S474). A UBZ4-type zinc finger spans residues 510-537 (RVSCPLCNQDFPPTKIEQHAMYCNGLME). Zn(2+) contacts are provided by C513, C516, H528, and C532. The interval 513–590 (CPLCNQDFPP…GEYQCHVEAC (78 aa)) is zinc-finger-like region. Glycyl lysine isopeptide (Lys-Gly) (interchain with G-Cter in SUMO2) cross-links involve residues K552, K570, K595, and K617. The tract at residues 607-654 (RPRVCAPVEGKQQQRLKKSKDKGHSQGRLLSLLEQSEHRTTGVEKKPK) is disordered. S637 carries the post-translational modification Phosphoserine. Positions 641–654 (QSEHRTTGVEKKPK) are enriched in basic and acidic residues. K652 is covalently cross-linked (Glycyl lysine isopeptide (Lys-Gly) (interchain with G-Cter in SUMO2)). Residues S665 and S689 each carry the phosphoserine modification. K708 is covalently cross-linked (Glycyl lysine isopeptide (Lys-Gly) (interchain with G-Cter in SUMO2)).

It belongs to the RAP80 family. Component of the ARISC complex, at least composed of UIMC1/RAP80, ABRAXAS1, BRCC3/BRCC36, BABAM2 and BABAM1/NBA1. Component of the BRCA1-A complex, at least composed of the BRCA1, BARD1, UIMC1/RAP80, ABRAXAS1, BRCC3/BRCC36, BABAM2 and BABAM1/NBA1. In the BRCA1-A complex, interacts directly with ABRAXAS1. Interacts with ESR1. Interacts with UBE2I. Interacts with NR6A1. Interacts with TSP57. Interacts with TRAIP. In terms of processing, sumoylated. Post-translationally, phosphorylated upon DNA damage by ATM or ATR.

The protein resides in the nucleus. In terms of biological role, ubiquitin-binding protein. Specifically recognizes and binds 'Lys-63'-linked ubiquitin. Plays a central role in the BRCA1-A complex by specifically binding 'Lys-63'-linked ubiquitinated histones H2A and H2AX at DNA lesions sites, leading to target the BRCA1-BARD1 heterodimer to sites of DNA damage at double-strand breaks (DSBs). The BRCA1-A complex also possesses deubiquitinase activity that specifically removes 'Lys-63'-linked ubiquitin on histones H2A and H2AX. Also weakly binds monoubiquitin but with much less affinity than 'Lys-63'-linked ubiquitin. May interact with monoubiquitinated histones H2A and H2B; the relevance of such results is however unclear in vivo. Does not bind Lys-48'-linked ubiquitin. May indirectly act as a transcriptional repressor by inhibiting the interaction of NR6A1 with the corepressor NCOR1. The protein is BRCA1-A complex subunit RAP80 (Uimc1) of Mus musculus (Mouse).